Consider the following 481-residue polypeptide: Phenylalanine--tRNA ligase alpha subunit (481 aa).

L-phenylalanine-binding positions include Thr322, 361-363 (QLE), and Tyr401. Position 403 (Glu403) interacts with Mg(2+). An L-phenylalanine-binding site is contributed by Phe426.

The protein belongs to the class-II aminoacyl-tRNA synthetase family. Phe-tRNA synthetase alpha subunit type 2 subfamily. Tetramer of two alpha and two beta subunits. Requires Mg(2+) as cofactor.

Its subcellular location is the cytoplasm. The catalysed reaction is tRNA(Phe) + L-phenylalanine + ATP = L-phenylalanyl-tRNA(Phe) + AMP + diphosphate + H(+). The chain is Phenylalanine--tRNA ligase alpha subunit from Methanoculleus marisnigri (strain ATCC 35101 / DSM 1498 / JR1).